The primary structure comprises 197 residues: Holliday junction branch migration complex subunit RuvA (197 aa).

The tract at residues 1–64 (MIDSIVGIIQ…LSELECYGFL (64 aa)) is domain I. Residues 65-143 (TREERELFLK…KEFKVASTSG (79 aa)) are domain II. A flexible linker region spans residues 144-152 (KEEKTYEKL). The interval 152-197 (LEEISLALLSLGYDIDEVNQVLSSEDFSELSLEDGIKLALKKLSKI) is domain III.

Belongs to the RuvA family. In terms of assembly, homotetramer. Forms an RuvA(8)-RuvB(12)-Holliday junction (HJ) complex. HJ DNA is sandwiched between 2 RuvA tetramers; dsDNA enters through RuvA and exits via RuvB. An RuvB hexamer assembles on each DNA strand where it exits the tetramer. Each RuvB hexamer is contacted by two RuvA subunits (via domain III) on 2 adjacent RuvB subunits; this complex drives branch migration. In the full resolvosome a probable DNA-RuvA(4)-RuvB(12)-RuvC(2) complex forms which resolves the HJ.

Its subcellular location is the cytoplasm. In terms of biological role, the RuvA-RuvB-RuvC complex processes Holliday junction (HJ) DNA during genetic recombination and DNA repair, while the RuvA-RuvB complex plays an important role in the rescue of blocked DNA replication forks via replication fork reversal (RFR). RuvA specifically binds to HJ cruciform DNA, conferring on it an open structure. The RuvB hexamer acts as an ATP-dependent pump, pulling dsDNA into and through the RuvAB complex. HJ branch migration allows RuvC to scan DNA until it finds its consensus sequence, where it cleaves and resolves the cruciform DNA. The sequence is that of Holliday junction branch migration complex subunit RuvA from Caldicellulosiruptor bescii (strain ATCC BAA-1888 / DSM 6725 / KCTC 15123 / Z-1320) (Anaerocellum thermophilum).